A 284-amino-acid polypeptide reads, in one-letter code: 2-dehydro-3-deoxyphosphooctonate aldolase (284 aa).

It belongs to the KdsA family.

The protein localises to the cytoplasm. The catalysed reaction is D-arabinose 5-phosphate + phosphoenolpyruvate + H2O = 3-deoxy-alpha-D-manno-2-octulosonate-8-phosphate + phosphate. It participates in carbohydrate biosynthesis; 3-deoxy-D-manno-octulosonate biosynthesis; 3-deoxy-D-manno-octulosonate from D-ribulose 5-phosphate: step 2/3. Its pathway is bacterial outer membrane biogenesis; lipopolysaccharide biosynthesis. The sequence is that of 2-dehydro-3-deoxyphosphooctonate aldolase from Glaesserella parasuis serovar 5 (strain SH0165) (Haemophilus parasuis).